Reading from the N-terminus, the 393-residue chain is NAD(P)H-quinone oxidoreductase subunit H, chloroplastic (393 aa).

It belongs to the complex I 49 kDa subunit family. NDH is composed of at least 16 different subunits, 5 of which are encoded in the nucleus.

Its subcellular location is the plastid. It localises to the chloroplast thylakoid membrane. The enzyme catalyses a plastoquinone + NADH + (n+1) H(+)(in) = a plastoquinol + NAD(+) + n H(+)(out). The catalysed reaction is a plastoquinone + NADPH + (n+1) H(+)(in) = a plastoquinol + NADP(+) + n H(+)(out). Its function is as follows. NDH shuttles electrons from NAD(P)H:plastoquinone, via FMN and iron-sulfur (Fe-S) centers, to quinones in the photosynthetic chain and possibly in a chloroplast respiratory chain. The immediate electron acceptor for the enzyme in this species is believed to be plastoquinone. Couples the redox reaction to proton translocation, and thus conserves the redox energy in a proton gradient. The sequence is that of NAD(P)H-quinone oxidoreductase subunit H, chloroplastic from Carica papaya (Papaya).